Reading from the N-terminus, the 226-residue chain is Phosphoribosylformylglycinamidine synthase subunit PurQ (226 aa).

The Glutamine amidotransferase type-1 domain occupies 3–226 (RVAVIRFPGT…FESLVEWCRS (224 aa)). Residue Cys-86 is the Nucleophile of the active site. Active-site residues include His-199 and Glu-201.

As to quaternary structure, part of the FGAM synthase complex composed of 1 PurL, 1 PurQ and 2 PurS subunits.

It is found in the cytoplasm. The catalysed reaction is N(2)-formyl-N(1)-(5-phospho-beta-D-ribosyl)glycinamide + L-glutamine + ATP + H2O = 2-formamido-N(1)-(5-O-phospho-beta-D-ribosyl)acetamidine + L-glutamate + ADP + phosphate + H(+). It catalyses the reaction L-glutamine + H2O = L-glutamate + NH4(+). Its pathway is purine metabolism; IMP biosynthesis via de novo pathway; 5-amino-1-(5-phospho-D-ribosyl)imidazole from N(2)-formyl-N(1)-(5-phospho-D-ribosyl)glycinamide: step 1/2. Its function is as follows. Part of the phosphoribosylformylglycinamidine synthase complex involved in the purines biosynthetic pathway. Catalyzes the ATP-dependent conversion of formylglycinamide ribonucleotide (FGAR) and glutamine to yield formylglycinamidine ribonucleotide (FGAM) and glutamate. The FGAM synthase complex is composed of three subunits. PurQ produces an ammonia molecule by converting glutamine to glutamate. PurL transfers the ammonia molecule to FGAR to form FGAM in an ATP-dependent manner. PurS interacts with PurQ and PurL and is thought to assist in the transfer of the ammonia molecule from PurQ to PurL. The polypeptide is Phosphoribosylformylglycinamidine synthase subunit PurQ (Methanopyrus kandleri (strain AV19 / DSM 6324 / JCM 9639 / NBRC 100938)).